An 802-amino-acid polypeptide reads, in one-letter code: Spondin-1 (802 aa).

The first 23 residues, 1 to 23, serve as a signal peptide directing secretion; sequence MAARLRPLALRLLARTFPLVARG. Residues 24–189 form the Reelin domain; the sequence is FSDETLEKAA…DSASEGVTDK (166 aa). Intrachain disulfides connect cysteine 39/cysteine 123, cysteine 151/cysteine 177, cysteine 194/cysteine 331, cysteine 195/cysteine 335, cysteine 197/cysteine 410, cysteine 438/cysteine 475, cysteine 449/cysteine 484, cysteine 454/cysteine 489, cysteine 497/cysteine 533, cysteine 508/cysteine 512, cysteine 543/cysteine 549, cysteine 554/cysteine 590, cysteine 565/cysteine 569, cysteine 600/cysteine 605, cysteine 610/cysteine 645, cysteine 621/cysteine 625, and cysteine 655/cysteine 660. A Spondin domain is found at 190–383; it reads PTLDCCACGT…LTSLDHPQSP (194 aa). N-linked (GlcNAc...) asparagine glycosylation occurs at asparagine 209. Ca(2+)-binding residues include aspartate 320, aspartate 349, and aspartate 353. 6 TSP type-1 domains span residues 437 to 490, 496 to 550, 553 to 606, 609 to 661, 663 to 716, and 749 to 801; these read TCIY…PGCS, TCMM…EECS, SCLV…PECH, PCLL…PECP, DCEL…RKCL, and VCRL…NVHP. Residue asparagine 676 is glycosylated (N-linked (GlcNAc...) asparagine).

The protein resides in the secreted. Its subcellular location is the extracellular space. It is found in the extracellular matrix. In terms of biological role, cell adhesion protein that promotes the attachment of spinal cord and sensory neuron cells and the outgrowth of neurites in vitro. May contribute to the growth and guidance of axons in both the spinal cord and the PNS. Somite-derived spondin 1 is an inhibitory signal involved in patterning the segmental migration of neural crest cells and their topographical segregation within the rostral somites in vitro. May be required to prevent the lateral drifting of the commissural axons after having crossed the floor plate. In Gallus gallus (Chicken), this protein is Spondin-1 (SPON1).